Consider the following 60-residue polypeptide: uncharacterized protein (60 aa).

This is an uncharacterized protein from Escherichia coli (Bacteriophage T4).